A 235-amino-acid chain; its full sequence is Hydroxyacylglutathione hydrolase (235 aa).

Zn(2+) contacts are provided by His-53, His-55, Asp-57, His-58, His-109, Asp-127, and His-165.

It belongs to the metallo-beta-lactamase superfamily. Glyoxalase II family. As to quaternary structure, monomer. Requires Zn(2+) as cofactor.

The enzyme catalyses an S-(2-hydroxyacyl)glutathione + H2O = a 2-hydroxy carboxylate + glutathione + H(+). It functions in the pathway secondary metabolite metabolism; methylglyoxal degradation; (R)-lactate from methylglyoxal: step 2/2. Functionally, thiolesterase that catalyzes the hydrolysis of S-D-lactoyl-glutathione to form glutathione and D-lactic acid. The protein is Hydroxyacylglutathione hydrolase of Actinobacillus pleuropneumoniae serotype 7 (strain AP76).